We begin with the raw amino-acid sequence, 200 residues long: MIIKQAEFIISAAWKKQFPIDGKDEIAFVGRSNVGKSSLINAITNRRKLVKVSGTPGKTRLVNFFMINNDFYFVDLPGYGYAKVSKKELEKWSQTIEGYLVGREQLKKVILLVDSRHKPTKDDITMYNWIKYYDYKCIVIATKSDKIKRSEKVKNEKLIKETLKFNDSDEFYFFSSATKQGRDELINNICSGINYSENSL.

The EngB-type G domain maps to 22–195; sequence GKDEIAFVGR…INNICSGINY (174 aa). GTP is bound by residues 30–37, 57–61, 75–78, 142–145, and 174–176; these read GRSNVGKS, GKTRL, DLPG, TKSD, and FSS. Ser37 and Thr59 together coordinate Mg(2+).

Belongs to the TRAFAC class TrmE-Era-EngA-EngB-Septin-like GTPase superfamily. EngB GTPase family. Mg(2+) is required as a cofactor.

In terms of biological role, necessary for normal cell division and for the maintenance of normal septation. The polypeptide is Probable GTP-binding protein EngB (Clostridium acetobutylicum (strain ATCC 824 / DSM 792 / JCM 1419 / IAM 19013 / LMG 5710 / NBRC 13948 / NRRL B-527 / VKM B-1787 / 2291 / W)).